The following is a 141-amino-acid chain: Protein NrdI (141 aa).

This sequence belongs to the NrdI family.

Its function is as follows. Probably involved in ribonucleotide reductase function. This chain is Protein NrdI, found in Bifidobacterium animalis subsp. lactis (strain AD011).